A 528-amino-acid polypeptide reads, in one-letter code: MPSDASTGYVDDQPGDEAYKRGALYKQTKARRADYDSDKEAKRPCTEDSDVALAGTSEEKEARLPKRKVAVMVGYCGTGYHGMQYNPPNRTIEAELFEAFVKAGAISRANSTDLKKNGFMRAARTDKGVHAGGNVISLKLIIEDPAIKDKINEHLPPGIRVWGISRVNKAFDCRKLCGSRWYEYLLPTYSFIGPKPNTYLARTIEQCGEAASEKPDRDQESLDFWEAFRKAVDEKFTQEEQDAIVNYVAPSKEDFDENSGLYQKVKQYKQMENAHRRSYRVSSAKLARFREAMKQYLGPHNFHNYTLGKDFKDPSTVRFMKDITVSDPFVIGEMKTEWVSIKIHGQSFMLHQIRKMISMATLVARCNCSPERIAQSYGPQKINIPKAPALGLLLESPVYEGYNKRLLEFGYEPIDFRNYQKEMDTFKMVHIYDKIYKEEVDENVFNAFFNYIDAFNQVTGAQGEPTKSHDPAKIQLSIIDFLLPCSSSPQENASPEAQKAPETPAGDNTISAEQPKTATEVPTTQSDA.

The tract at residues 1 to 59 (MPSDASTGYVDDQPGDEAYKRGALYKQTKARRADYDSDKEAKRPCTEDSDVALAGTSEE) is disordered. The segment covering 31–46 (RRADYDSDKEAKRPCT) has biased composition (basic and acidic residues). Residue Asp-126 is the Nucleophile of the active site. 2 stretches are compositionally biased toward polar residues: residues 486–495 (SSSPQENASP) and 506–528 (GDNT…QSDA). The tract at residues 486-528 (SSSPQENASPEAQKAPETPAGDNTISAEQPKTATEVPTTQSDA) is disordered.

Belongs to the tRNA pseudouridine synthase TruA family. The cofactor is Zn(2+).

It localises to the nucleus. The enzyme catalyses a uridine in tRNA = a pseudouridine in tRNA. It catalyses the reaction uridine in snRNA = pseudouridine in snRNA. It carries out the reaction a uridine in mRNA = a pseudouridine in mRNA. In terms of biological role, formation of pseudouridine at positions 27 and 28 in the anticodon stem and loop of transfer RNAs; at positions 34 and 36 of intron-containing precursor tRNA(Ile) and at position 35 in the intron-containing tRNA(Tyr). Catalyzes pseudouridylation at position 44 in U2 snRNA. Also catalyzes pseudouridylation of mRNAs. This Eremothecium gossypii (strain ATCC 10895 / CBS 109.51 / FGSC 9923 / NRRL Y-1056) (Yeast) protein is tRNA pseudouridine synthase 1 (PUS1).